A 168-amino-acid polypeptide reads, in one-letter code: 2-C-methyl-D-erythritol 2,4-cyclodiphosphate synthase (168 aa).

D11 and H13 together coordinate a divalent metal cation. Residues 11-13 (DVH) and 41-42 (HS) contribute to the 4-CDP-2-C-methyl-D-erythritol 2-phosphate site. Residue H49 coordinates a divalent metal cation. Residues 63–65 (DIG), 68–72 (FPDTD), 139–142 (TTTE), F146, and R149 each bind 4-CDP-2-C-methyl-D-erythritol 2-phosphate.

This sequence belongs to the IspF family. In terms of assembly, homotrimer. Requires a divalent metal cation as cofactor.

It carries out the reaction 4-CDP-2-C-methyl-D-erythritol 2-phosphate = 2-C-methyl-D-erythritol 2,4-cyclic diphosphate + CMP. It functions in the pathway isoprenoid biosynthesis; isopentenyl diphosphate biosynthesis via DXP pathway; isopentenyl diphosphate from 1-deoxy-D-xylulose 5-phosphate: step 4/6. Its function is as follows. Involved in the biosynthesis of isopentenyl diphosphate (IPP) and dimethylallyl diphosphate (DMAPP), two major building blocks of isoprenoid compounds. Catalyzes the conversion of 4-diphosphocytidyl-2-C-methyl-D-erythritol 2-phosphate (CDP-ME2P) to 2-C-methyl-D-erythritol 2,4-cyclodiphosphate (ME-CPP) with a corresponding release of cytidine 5-monophosphate (CMP). The sequence is that of 2-C-methyl-D-erythritol 2,4-cyclodiphosphate synthase from Psychrobacter cryohalolentis (strain ATCC BAA-1226 / DSM 17306 / VKM B-2378 / K5).